Reading from the N-terminus, the 465-residue chain is MSDSRTTTTKNNTTNHKTSRQGPGSACEECRRRKLRCDRQPQCQNCVDAGVYCVTNLARPARGPKKGHLKALKGRIATLERCLLEQRDGMLVDPISDDELLDKALSASSPASQSPDPSEEVSENILEDLDQVFFERVQPMVPILQRHRYFSWAREPQQSANRRGLQQAIRTLAAGVSSQLPEVRVALYRTTRHTLESLESDDTLLTAPDFEQVQAWILIAIYEFMQVSYSRGWMSAGRVFRLVQLLRLPEIDASPLSLLDLDLDPDSKWVVAEEKRRTVWMAYIMDCSLNLRHKGSLTLTEQALTRLPMPESEFQCGHPISMGFLAEALAGTDITSPLSSFAKCILLATISGRTLSHRHLSMAELLRGNPLQDVWTRHQWIDTTLTAHLQLSFSLPTAAESSDPMLLFAKMIGQAGVLSLYDILQSTPWEPETVSLLPDYEACALQAARETVVLARNLRHFSCFK.

The span at 1 to 16 shows a compositional bias: low complexity; sequence MSDSRTTTTKNNTTNH. The disordered stretch occupies residues 1 to 25; that stretch reads MSDSRTTTTKNNTTNHKTSRQGPGS. The segment at residues 27–53 is a DNA-binding region (zn(2)-C6 fungal-type); that stretch reads CEECRRRKLRCDRQPQCQNCVDAGVYC.

Its subcellular location is the nucleus. Transcription factor that regulates the expression of the gene cluster that mediates the biosynthesis of azaphilones, a class of fungal metabolites characterized by a highly oxygenated pyrano-quinone bicyclic core and exhibiting a broad range of bioactivities. This chain is Azaphilone cluster-specific transcription factor azaR, found in Aspergillus niger (strain ATCC 1015 / CBS 113.46 / FGSC A1144 / LSHB Ac4 / NCTC 3858a / NRRL 328 / USDA 3528.7).